Reading from the N-terminus, the 70-residue chain is Large ribosomal subunit protein bL31 (70 aa).

Positions 16, 18, 37, and 40 each coordinate Zn(2+).

Belongs to the bacterial ribosomal protein bL31 family. Type A subfamily. As to quaternary structure, part of the 50S ribosomal subunit. Zn(2+) serves as cofactor.

Its function is as follows. Binds the 23S rRNA. The protein is Large ribosomal subunit protein bL31 of Actinobacillus pleuropneumoniae serotype 5b (strain L20).